A 378-amino-acid polypeptide reads, in one-letter code: C-C chemokine receptor type 7 (378 aa).

Residues 1-24 form the signal peptide; that stretch reads MDLGKPMKSVLVVALLVIFQVCLC. At 25-59 the chain is on the extracellular side; the sequence is QDEVTDDYIGDNTTVDYTLFESLCSKKDVRNFKAW. Asn36 carries N-linked (GlcNAc...) asparagine glycosylation. Residues 60-86 traverse the membrane as a helical segment; the sequence is FLPIMYSIICFVGLLGNGLVVLTYIYF. The Cytoplasmic segment spans residues 87 to 95; it reads KRLKTMTDT. The helical transmembrane segment at 96 to 116 threads the bilayer; it reads YLLNLAVADILFLLTLPFWAY. The Extracellular portion of the chain corresponds to 117-130; the sequence is SAAKSWVFGVHFCK. A disulfide bridge connects residues Cys129 and Cys210. The helical transmembrane segment at 131-152 threads the bilayer; it reads LIFAIYKMSFFSGMLLLLCISI. Topologically, residues 153–170 are cytoplasmic; the sequence is DRYVAIVQAVSAHRHRAR. The chain crosses the membrane as a helical span at residues 171-191; that stretch reads VLLISKLSCVGIWILATVLSI. The Extracellular segment spans residues 192–219; that stretch reads PELLYSDLQRSSSEQAMRCSLITEHVEA. Residues 220–247 traverse the membrane as a helical segment; that stretch reads FITIQVAQMVIGFLVPLLAMSFCYLVII. Residues 248–263 are Cytoplasmic-facing; it reads RTLLQARNFERNKAIK. A helical transmembrane segment spans residues 264–289; that stretch reads VIIAVVVVFIVFQLPYNGVVLAQTVA. The Extracellular portion of the chain corresponds to 290–313; sequence NFNITSSTCELSKQLNIAYDVTYS. A helical transmembrane segment spans residues 314–331; it reads LACVRCCVNPFLYAFIGV. The Cytoplasmic portion of the chain corresponds to 332–378; that stretch reads KFRNDLFKLFKDLGCLSQEQLRQWSSCRHIRRSSMSVEAETTTTFSP.

This sequence belongs to the G-protein coupled receptor 1 family. In terms of tissue distribution, expressed in various lymphoid tissues and activated B- and T-lymphocytes, strongly up-regulated in B-cells infected with Epstein-Barr virus and T-cells infected with herpesvirus 6 or 7.

It localises to the cell membrane. Functionally, receptor for the MIP-3-beta chemokine. Probable mediator of EBV effects on B-lymphocytes or of normal lymphocyte functions. The sequence is that of C-C chemokine receptor type 7 (CCR7) from Homo sapiens (Human).